We begin with the raw amino-acid sequence, 633 residues long: MA3 DOMAIN-CONTAINING TRANSLATION REGULATORY FACTOR 4 (633 aa).

4 consecutive MI domains span residues 56-177 (DYKR…RAKK), 220-341 (ETKR…ERSD), 351-472 (RFKK…EISN), and 514-633 (DAKD…STDS). The short motif at 94–101 (VKRLVSMA) is the Nuclear localization signal 1 element. A Nuclear localization signal 2 motif is present at residues 389–396 (LKKLITLA).

The protein belongs to the PDCD4 family. Binds to EIF4A1. The association with ribosomes is modulated by cellular energy status and TOR activity. In terms of tissue distribution, mostly expressed, at low levels, in rosette leaves and flower buds, and, to a lower extent, in roots, stems, cauline leaves and flowers.

Its subcellular location is the nucleus. It is found in the cytoplasm. The protein localises to the cytosol. Involved in target of rapamycin (TOR)-regulated translation control, especially under energy-deficient conditions. This chain is MA3 DOMAIN-CONTAINING TRANSLATION REGULATORY FACTOR 4, found in Arabidopsis thaliana (Mouse-ear cress).